The primary structure comprises 174 residues: Crossover junction endodeoxyribonuclease RuvC (174 aa).

Active-site residues include Asp8, Glu67, and Asp139. Mg(2+) contacts are provided by Asp8, Glu67, and Asp139.

It belongs to the RuvC family. As to quaternary structure, homodimer which binds Holliday junction (HJ) DNA. The HJ becomes 2-fold symmetrical on binding to RuvC with unstacked arms; it has a different conformation from HJ DNA in complex with RuvA. In the full resolvosome a probable DNA-RuvA(4)-RuvB(12)-RuvC(2) complex forms which resolves the HJ. Requires Mg(2+) as cofactor.

The protein resides in the cytoplasm. The enzyme catalyses Endonucleolytic cleavage at a junction such as a reciprocal single-stranded crossover between two homologous DNA duplexes (Holliday junction).. The RuvA-RuvB-RuvC complex processes Holliday junction (HJ) DNA during genetic recombination and DNA repair. Endonuclease that resolves HJ intermediates. Cleaves cruciform DNA by making single-stranded nicks across the HJ at symmetrical positions within the homologous arms, yielding a 5'-phosphate and a 3'-hydroxyl group; requires a central core of homology in the junction. The consensus cleavage sequence is 5'-(A/T)TT(C/G)-3'. Cleavage occurs on the 3'-side of the TT dinucleotide at the point of strand exchange. HJ branch migration catalyzed by RuvA-RuvB allows RuvC to scan DNA until it finds its consensus sequence, where it cleaves and resolves the cruciform DNA. The protein is Crossover junction endodeoxyribonuclease RuvC of Pseudomonas putida (strain GB-1).